The sequence spans 193 residues: Potassium-transporting ATPase KdpC subunit (193 aa).

The chain crosses the membrane as a helical span at residues 14–34; sequence ITFTFLVLCGLVYPLIVTGIA.

It belongs to the KdpC family. In terms of assembly, the system is composed of three essential subunits: KdpA, KdpB and KdpC.

Its subcellular location is the cell membrane. Its function is as follows. Part of the high-affinity ATP-driven potassium transport (or Kdp) system, which catalyzes the hydrolysis of ATP coupled with the electrogenic transport of potassium into the cytoplasm. This subunit acts as a catalytic chaperone that increases the ATP-binding affinity of the ATP-hydrolyzing subunit KdpB by the formation of a transient KdpB/KdpC/ATP ternary complex. The sequence is that of Potassium-transporting ATPase KdpC subunit from Bacillus cereus (strain Q1).